We begin with the raw amino-acid sequence, 196 residues long: GTP cyclohydrolase-2 (196 aa).

49–53 (RIHSE) is a GTP binding site. C54, C65, and C67 together coordinate Zn(2+). Residues Q70, 92 to 94 (EGR), and T114 each bind GTP. Catalysis depends on D126, which acts as the Proton acceptor. R128 (nucleophile) is an active-site residue. GTP-binding residues include T149 and K154.

This sequence belongs to the GTP cyclohydrolase II family. In terms of assembly, homodimer. The cofactor is Zn(2+).

The enzyme catalyses GTP + 4 H2O = 2,5-diamino-6-hydroxy-4-(5-phosphoribosylamino)-pyrimidine + formate + 2 phosphate + 3 H(+). Its pathway is cofactor biosynthesis; riboflavin biosynthesis; 5-amino-6-(D-ribitylamino)uracil from GTP: step 1/4. In terms of biological role, catalyzes the conversion of GTP to 2,5-diamino-6-ribosylamino-4(3H)-pyrimidinone 5'-phosphate (DARP), formate and pyrophosphate. This is GTP cyclohydrolase-2 from Hamiltonella defensa subsp. Acyrthosiphon pisum (strain 5AT).